Here is a 347-residue protein sequence, read N- to C-terminus: Very-long-chain 3-oxoacyl-CoA reductase (347 aa).

Residues 22–42 (LLWSIFGFGVLKATTLILRIM) traverse the membrane as a helical segment. Val68, Asp122, Asn149, Tyr223, Lys227, Val256, and Ser258 together coordinate NADP(+). The active-site Proton donor is the Tyr223. Lys227 serves as the catalytic Lowers pKa of active site Tyr.

This sequence belongs to the short-chain dehydrogenases/reductases (SDR) family.

The protein localises to the endoplasmic reticulum membrane. The catalysed reaction is a very-long-chain (3R)-3-hydroxyacyl-CoA + NADP(+) = a very-long-chain 3-oxoacyl-CoA + NADPH + H(+). The protein operates within lipid metabolism; fatty acid biosynthesis. Functionally, component of the microsomal membrane bound fatty acid elongation system, which produces the 26-carbon very long-chain fatty acids (VLCFA) from palmitate. Catalyzes the reduction of the 3-ketoacyl-CoA intermediate that is formed in each cycle of fatty acid elongation. VLCFAs serve as precursors for ceramide and sphingolipids. The polypeptide is Very-long-chain 3-oxoacyl-CoA reductase (Vanderwaltozyma polyspora (strain ATCC 22028 / DSM 70294 / BCRC 21397 / CBS 2163 / NBRC 10782 / NRRL Y-8283 / UCD 57-17) (Kluyveromyces polysporus)).